A 138-amino-acid polypeptide reads, in one-letter code: ATP synthase epsilon chain (138 aa).

Belongs to the ATPase epsilon chain family. F-type ATPases have 2 components, CF(1) - the catalytic core - and CF(0) - the membrane proton channel. CF(1) has five subunits: alpha(3), beta(3), gamma(1), delta(1), epsilon(1). CF(0) has three main subunits: a, b and c.

It is found in the cell inner membrane. In terms of biological role, produces ATP from ADP in the presence of a proton gradient across the membrane. The polypeptide is ATP synthase epsilon chain (Trichlorobacter lovleyi (strain ATCC BAA-1151 / DSM 17278 / SZ) (Geobacter lovleyi)).